The sequence spans 937 residues: Coiled-coil domain-containing protein 39 (937 aa).

Coiled-coil stretches lie at residues 16-137, 165-339, 365-615, and 664-816; these read AIPV…CQMN, QQDD…KKDI, EKTL…SQIR, and VIKA…LKQT. The segment at 866–937 is disordered; that stretch reads LPTARGPSSR…NIPKEKKLSK (72 aa). The segment covering 873 to 887 has biased composition (low complexity); sequence SSRSSSQSSSLSSFR. Phosphoserine occurs at positions 888 and 896. A compositionally biased stretch (low complexity) spans 915 to 928; sequence NDSSRSASSGSNSN.

It belongs to the CCDC39 family. In terms of tissue distribution, strongly expressed in tissues rich in ciliated cells. Expressed in olfactory and vomeronasal sensory neurons and the respiratory epithelium. Expressed in node cells carrying motile cilia, in upper and lower airways, and in ependymal and choroid plexus cells.

It localises to the cytoplasm. The protein localises to the cytoskeleton. Its subcellular location is the cilium axoneme. Its function is as follows. Required for assembly of dynein regulatory complex (DRC) and inner dynein arm (IDA) complexes, which are responsible for ciliary beat regulation, thereby playing a central role in motility in cilia and flagella. Probably acts together with CCDC40 to form a molecular ruler that determines the 96 nanometer (nm) repeat length and arrangements of components in cilia and flagella. Not required for outer dynein arm complexes assembly. This chain is Coiled-coil domain-containing protein 39, found in Mus musculus (Mouse).